The chain runs to 943 residues: Zinc finger BED domain-containing protein 39 (943 aa).

Positions 1–99 (MSSVSSDIDG…DIAMDVSGST (99 aa)) are disordered. A compositionally biased stretch (basic and acidic residues) spans 12–21 (PETKRFRIDV). Positions 50–72 (SPAAPSSASYRSSNSSVISSSES) are enriched in low complexity. Over residues 73–85 (PIKDEDVDVHDGQ) the composition is skewed to basic and acidic residues. The BED-type; degenerate zinc-finger motif lies at 184 to 235 (NKQTPVWKYFVYNKTENLSRCIVGDCTYMLKGPHTSTLACHLKKHTREYSEF). Disordered regions lie at residues 242-315 (YSRT…KEPS) and 328-348 (RQATNNSNGSPPTTPHAPQLP). A compositionally biased stretch (polar residues) spans 262-276 (TLQTQNTPRQTGSPA). Over residues 277-292 (STCNTNSNTSSSVSSG) the composition is skewed to low complexity. Positions 328–338 (RQATNNSNGSP) are enriched in polar residues.

In terms of tissue distribution, expressed in distal tip cells and in germline cells.

The protein resides in the nucleus. Its subcellular location is the cytoplasm. Regulates the timing and orientation of distal tip cell migration during gonadal development. May act in parallel to cacn-1 and Rac GTPases to control the anterior and posterior migration of distal tip cells. This chain is Zinc finger BED domain-containing protein 39, found in Caenorhabditis elegans.